Here is a 515-residue protein sequence, read N- to C-terminus: Brahma-associated protein of 60 kDa (515 aa).

A disordered region spans residues 1 to 124 (MSQRFAPGQA…GGSKSDFATA (124 aa)). The span at 17 to 34 (QPPPPAPGMRPYPPPGAS) shows a compositional bias: pro residues. Positions 49–62 (PVPGTANVAGVPGV) are enriched in low complexity. Residues 90 to 103 (TGAGGGGVGSGGGS) show a composition bias toward gly residues. Residues 116 to 204 (GSKSDFATAK…SKEPTNDGEE (89 aa)) form a DNA-binding region. In terms of domain architecture, SWIB/MDM2 spans 291–368 (YQPLQFKLDP…PQRLNPLLHP (78 aa)).

As to quaternary structure, there are 2 distinct Brahma complexes in the fruit fly, the Brahma-associated proteins (BAP) and Polybromo-containing BAP (PBAP) complexes, which are composed of common subunits Brm, Mor, Snr1/Bap45, Bap111/Dalo, Bap55, Bap60 and Act42A/Bap47, and additional signature subunits osa in the BAP complex and Polybromo and Bap170 in the PBAP complex. Interacts with sisA and sc. Interacts with mor. Interacts with p53. Interacts with erm (via N-terminal). Interacts with akirin; interaction is immune stimulation-dependent; activates selected Rel target gene promoters.

Involved in the recruitment and site-specific anchoring of the Brahma complex at specific promoter sites. The Brahma complex is a multiprotein complex which is the equivalent of the yeast SWI/SNF complex and acts by remodeling the chromatin by catalyzing an ATP-dependent alteration in the structure of nucleosomal DNA. This complex can both serve as a transcriptional coactivator or corepressor, depending on the context. Participates in X-chromosomal dosage compensation. Participates in neurogenesis. The sequence is that of Brahma-associated protein of 60 kDa (Bap60) from Drosophila melanogaster (Fruit fly).